The primary structure comprises 334 residues: Holliday junction branch migration complex subunit RuvB (334 aa).

The tract at residues 1 to 182 is large ATPase domain (RuvB-L); sequence MDERLVSTEA…FGVHARLEYY (182 aa). ATP is bound by residues L21, R22, G63, K66, T67, T68, 129–131, R172, Y182, and R219; that span reads EDF. T67 contributes to the Mg(2+) binding site. A small ATPAse domain (RuvB-S) region spans residues 183–253; the sequence is EQRDLAHIVS…IAEDALERLQ (71 aa). The segment at 256–334 is head domain (RuvB-H); sequence KLGLDHIDHK…HFQMEVPIRD (79 aa). Residues R311 and R316 each contribute to the DNA site.

It belongs to the RuvB family. In terms of assembly, homohexamer. Forms an RuvA(8)-RuvB(12)-Holliday junction (HJ) complex. HJ DNA is sandwiched between 2 RuvA tetramers; dsDNA enters through RuvA and exits via RuvB. An RuvB hexamer assembles on each DNA strand where it exits the tetramer. Each RuvB hexamer is contacted by two RuvA subunits (via domain III) on 2 adjacent RuvB subunits; this complex drives branch migration. In the full resolvosome a probable DNA-RuvA(4)-RuvB(12)-RuvC(2) complex forms which resolves the HJ.

The protein localises to the cytoplasm. The catalysed reaction is ATP + H2O = ADP + phosphate + H(+). Functionally, the RuvA-RuvB-RuvC complex processes Holliday junction (HJ) DNA during genetic recombination and DNA repair, while the RuvA-RuvB complex plays an important role in the rescue of blocked DNA replication forks via replication fork reversal (RFR). RuvA specifically binds to HJ cruciform DNA, conferring on it an open structure. The RuvB hexamer acts as an ATP-dependent pump, pulling dsDNA into and through the RuvAB complex. RuvB forms 2 homohexamers on either side of HJ DNA bound by 1 or 2 RuvA tetramers; 4 subunits per hexamer contact DNA at a time. Coordinated motions by a converter formed by DNA-disengaged RuvB subunits stimulates ATP hydrolysis and nucleotide exchange. Immobilization of the converter enables RuvB to convert the ATP-contained energy into a lever motion, pulling 2 nucleotides of DNA out of the RuvA tetramer per ATP hydrolyzed, thus driving DNA branch migration. The RuvB motors rotate together with the DNA substrate, which together with the progressing nucleotide cycle form the mechanistic basis for DNA recombination by continuous HJ branch migration. Branch migration allows RuvC to scan DNA until it finds its consensus sequence, where it cleaves and resolves cruciform DNA. This chain is Holliday junction branch migration complex subunit RuvB, found in Bacillus pumilus (strain SAFR-032).